The following is a 191-amino-acid chain: Dephospho-CoA kinase (191 aa).

The DPCK domain maps to 3 to 191 (AIGITGSYAS…KLIKNLECQV (189 aa)). Position 11 to 16 (11 to 16 (ASGKTF)) interacts with ATP.

This sequence belongs to the CoaE family.

Its subcellular location is the cytoplasm. It catalyses the reaction 3'-dephospho-CoA + ATP = ADP + CoA + H(+). The protein operates within cofactor biosynthesis; coenzyme A biosynthesis; CoA from (R)-pantothenate: step 5/5. Its function is as follows. Catalyzes the phosphorylation of the 3'-hydroxyl group of dephosphocoenzyme A to form coenzyme A. The chain is Dephospho-CoA kinase from Rickettsia typhi (strain ATCC VR-144 / Wilmington).